The sequence spans 393 residues: Glutamate 5-kinase (393 aa).

Lys17 contacts ATP. Substrate contacts are provided by Ser57, Asp144, and Asn156. 176–177 (SD) lines the ATP pocket. One can recognise a PUA domain in the interval 282 to 359 (AGSIAIDAGA…AEIAAILGYA (78 aa)). The interval 374–393 (APSGARSEEGGNEKKGKLHA) is disordered. The segment covering 379 to 393 (RSEEGGNEKKGKLHA) has biased composition (basic and acidic residues).

This sequence belongs to the glutamate 5-kinase family.

It localises to the cytoplasm. It catalyses the reaction L-glutamate + ATP = L-glutamyl 5-phosphate + ADP. It participates in amino-acid biosynthesis; L-proline biosynthesis; L-glutamate 5-semialdehyde from L-glutamate: step 1/2. Functionally, catalyzes the transfer of a phosphate group to glutamate to form L-glutamate 5-phosphate. The sequence is that of Glutamate 5-kinase from Sinorhizobium fredii (strain NBRC 101917 / NGR234).